Consider the following 240-residue polypeptide: DNA repair protein RecO (240 aa).

This sequence belongs to the RecO family.

Functionally, involved in DNA repair and RecF pathway recombination. The chain is DNA repair protein RecO from Actinobacillus pleuropneumoniae serotype 5b (strain L20).